A 74-amino-acid polypeptide reads, in one-letter code: DNA-directed RNA polymerase subunit omega (74 aa).

This sequence belongs to the RNA polymerase subunit omega family. The RNAP catalytic core consists of 2 alpha, 1 beta, 1 beta' and 1 omega subunit. When a sigma factor is associated with the core the holoenzyme is formed, which can initiate transcription.

It catalyses the reaction RNA(n) + a ribonucleoside 5'-triphosphate = RNA(n+1) + diphosphate. Promotes RNA polymerase assembly. Latches the N- and C-terminal regions of the beta' subunit thereby facilitating its interaction with the beta and alpha subunits. The chain is DNA-directed RNA polymerase subunit omega from Helicobacter pylori (strain Shi470).